Consider the following 240-residue polypeptide: Ion-translocating oxidoreductase complex subunit E (240 aa).

Transmembrane regions (helical) follow at residues 41–61, 71–91, 95–115, 130–150, and 184–204; these read LGLG…VSLV, LPAF…LMQA, ELYQ…VILG, SFDG…LGGL, and GFLL…LIAL.

Belongs to the NqrDE/RnfAE family. As to quaternary structure, the complex is composed of six subunits: RnfA, RnfB, RnfC, RnfD, RnfE and RnfG.

The protein resides in the cell inner membrane. Part of a membrane-bound complex that couples electron transfer with translocation of ions across the membrane. This Pseudomonas aeruginosa (strain ATCC 15692 / DSM 22644 / CIP 104116 / JCM 14847 / LMG 12228 / 1C / PRS 101 / PAO1) protein is Ion-translocating oxidoreductase complex subunit E.